Here is a 536-residue protein sequence, read N- to C-terminus: Phosphoenolpyruvate carboxykinase (ATP) (536 aa).

Substrate contacts are provided by Arg-61, Tyr-195, and Lys-201. ATP is bound by residues Lys-201, His-220, and 236 to 244 (GLSGTGKTT). Mn(2+) contacts are provided by Lys-201 and His-220. Position 257 (Asp-257) interacts with Mn(2+). Positions 285, 322, and 447 each coordinate ATP. Arg-322 contacts substrate.

It belongs to the phosphoenolpyruvate carboxykinase (ATP) family. Requires Mn(2+) as cofactor.

The protein resides in the cytoplasm. It catalyses the reaction oxaloacetate + ATP = phosphoenolpyruvate + ADP + CO2. It functions in the pathway carbohydrate biosynthesis; gluconeogenesis. In terms of biological role, involved in the gluconeogenesis. Catalyzes the conversion of oxaloacetate (OAA) to phosphoenolpyruvate (PEP) through direct phosphoryl transfer between the nucleoside triphosphate and OAA. In Rhizobium rhizogenes (strain K84 / ATCC BAA-868) (Agrobacterium radiobacter), this protein is Phosphoenolpyruvate carboxykinase (ATP).